Reading from the N-terminus, the 278-residue chain is Non-haem bromoperoxidase BPO-A2 (278 aa).

Residues 26-264 form the AB hydrolase-1 domain; sequence PVVLIHGFPL…GAPHGLLWTH (239 aa). Active-site residues include Ser-99, Asp-229, and His-258.

Belongs to the AB hydrolase superfamily. Bacterial non-heme haloperoxidase / perhydrolase family. In terms of assembly, homotrimer.

Functionally, may be a chlorinating enzyme involved in 7-chlorotetracycline biosynthesis. This Kitasatospora aureofaciens (Streptomyces aureofaciens) protein is Non-haem bromoperoxidase BPO-A2 (bpoA2).